A 107-amino-acid polypeptide reads, in one-letter code: Thiosulfate sulfurtransferase GlpE (107 aa).

The Rhodanese domain occupies 16 to 104 (KKRDIVIADV…WKAHHPTSDA (89 aa)). Residue cysteine 64 is the Cysteine persulfide intermediate of the active site.

It belongs to the GlpE family.

It is found in the cytoplasm. It carries out the reaction thiosulfate + hydrogen cyanide = thiocyanate + sulfite + 2 H(+). It catalyses the reaction thiosulfate + [thioredoxin]-dithiol = [thioredoxin]-disulfide + hydrogen sulfide + sulfite + 2 H(+). Its function is as follows. Transferase that catalyzes the transfer of sulfur from thiosulfate to thiophilic acceptors such as cyanide or dithiols. May function in a CysM-independent thiosulfate assimilation pathway by catalyzing the conversion of thiosulfate to sulfite, which can then be used for L-cysteine biosynthesis. The sequence is that of Thiosulfate sulfurtransferase GlpE from Coxiella burnetii (strain CbuK_Q154) (Coxiella burnetii (strain Q154)).